Reading from the N-terminus, the 218-residue chain is Ras-related protein RabO (218 aa).

15–22 (GDYCVGKT) lines the GTP pocket. An Effector region motif is present at residues 37–45 (RNCNIGVDF). GTP is bound by residues 63–67 (DTGGQ) and 122–125 (NKID). Residue Cys215 is modified to Cysteine methyl ester. A lipid anchor (S-geranylgeranyl cysteine) is attached at Cys215. Residues 216 to 218 (FIL) constitute a propeptide, removed in mature form.

Belongs to the small GTPase superfamily. Rab family.

It is found in the cell membrane. This is Ras-related protein RabO (rabO) from Dictyostelium discoideum (Social amoeba).